The following is a 163-amino-acid chain: Nucleotide-binding protein GWCH70_0711 (163 aa).

This sequence belongs to the YajQ family.

Its function is as follows. Nucleotide-binding protein. The protein is Nucleotide-binding protein GWCH70_0711 of Geobacillus sp. (strain WCH70).